The following is a 274-amino-acid chain: NAD kinase (274 aa).

The Proton acceptor role is filled by aspartate 60. NAD(+) is bound by residues 60-61 (DG), lysine 65, 127-128 (NE), and arginine 152.

This sequence belongs to the NAD kinase family. A divalent metal cation serves as cofactor.

It is found in the cytoplasm. The catalysed reaction is NAD(+) + ATP = ADP + NADP(+) + H(+). Involved in the regulation of the intracellular balance of NAD and NADP, and is a key enzyme in the biosynthesis of NADP. Catalyzes specifically the phosphorylation on 2'-hydroxyl of the adenosine moiety of NAD to yield NADP. The protein is NAD kinase of Mycoplasmoides gallisepticum (strain R(low / passage 15 / clone 2)) (Mycoplasma gallisepticum).